The chain runs to 327 residues: Putative HTH-type transcriptional regulatory protein MM_0444 (327 aa).

An HTH cro/C1-type domain is found at 132–190 (LKKARTTQSMSLGTLASMVGVSRRTISKYEEEGMDASIDVVLHLEDIFGVELAKPIDIL). The segment at residues 143–162 (LGTLASMVGVSRRTISKYEE) is a DNA-binding region (H-T-H motif). The disordered stretch occupies residues 195-214 (SRKPRKKAEPEKEEPKGKPG). Over residues 201–211 (KAEPEKEEPKG) the composition is skewed to basic and acidic residues.

This chain is Putative HTH-type transcriptional regulatory protein MM_0444, found in Methanosarcina mazei (strain ATCC BAA-159 / DSM 3647 / Goe1 / Go1 / JCM 11833 / OCM 88) (Methanosarcina frisia).